Here is a 665-residue protein sequence, read N- to C-terminus: Methionine--tRNA ligase (665 aa).

The 'HIGH' region motif lies at 16–26; the sequence is YYPSGKAHIGH. Residues 311 to 315 carry the 'KMSKS' region motif; that stretch reads KMSKS. K314 serves as a coordination point for ATP. The tRNA-binding domain maps to 564-665; sequence DFDKIDLRVA…SALPNGAKVK (102 aa).

Belongs to the class-I aminoacyl-tRNA synthetase family. MetG type 2B subfamily. As to quaternary structure, homodimer.

Its subcellular location is the cytoplasm. The catalysed reaction is tRNA(Met) + L-methionine + ATP = L-methionyl-tRNA(Met) + AMP + diphosphate. Is required not only for elongation of protein synthesis but also for the initiation of all mRNA translation through initiator tRNA(fMet) aminoacylation. This is Methionine--tRNA ligase from Listeria monocytogenes serotype 4b (strain F2365).